Reading from the N-terminus, the 323-residue chain is Homoserine kinase (323 aa).

Residue Pro-97–Ala-107 coordinates ATP.

Belongs to the GHMP kinase family. Homoserine kinase subfamily.

It localises to the cytoplasm. It catalyses the reaction L-homoserine + ATP = O-phospho-L-homoserine + ADP + H(+). It functions in the pathway amino-acid biosynthesis; L-threonine biosynthesis; L-threonine from L-aspartate: step 4/5. Catalyzes the ATP-dependent phosphorylation of L-homoserine to L-homoserine phosphate. The sequence is that of Homoserine kinase from Leifsonia xyli subsp. xyli (strain CTCB07).